Here is a 277-residue protein sequence, read N- to C-terminus: Phosphonates import ATP-binding protein PhnC 2 (277 aa).

The ABC transporter domain occupies 5-253 (IHVQGLNKTF…FLNDLYGADA (249 aa)). 37 to 44 (GASGSGKS) lines the ATP pocket.

Belongs to the ABC transporter superfamily. Phosphonates importer (TC 3.A.1.9.1) family. The complex is composed of two ATP-binding proteins (PhnC), two transmembrane proteins (PhnE) and a solute-binding protein (PhnD).

Its subcellular location is the cell inner membrane. It carries out the reaction phosphonate(out) + ATP + H2O = phosphonate(in) + ADP + phosphate + H(+). Part of the ABC transporter complex PhnCDE involved in phosphonates import. Responsible for energy coupling to the transport system. This chain is Phosphonates import ATP-binding protein PhnC 2, found in Pseudomonas syringae pv. syringae (strain B728a).